The chain runs to 139 residues: Growth factor (139 aa).

The N-terminal stretch at 1 to 19 (MSMKYLMLLFATMIIRSFA) is a signal peptide. The N-linked (GlcNAc...) asparagine; by host glycan is linked to Asn34. The 41-residue stretch at 41-81 (AIRLCGPEGDGYCLHGDCIHARDINGMYCRCSHGYTGIRCQ) folds into the EGF-like domain. 3 disulfide bridges follow: Cys45-Cys58, Cys53-Cys69, and Cys71-Cys80. A glycan (N-linked (GlcNAc...) asparagine; by host) is linked at Asn95.

It belongs to the orthopoxvirus OPG019 family.

It is found in the secreted. Functionally, stimulates cellular proliferation (hyperplasia)and mobility around infected cells to promote rapid and efficient spread of infection. The polypeptide is Growth factor (OPG019) (Camelus).